A 200-amino-acid polypeptide reads, in one-letter code: DNA-binding protein HupB (200 aa).

Residues 1-90 (MNKAELIDVL…PGAQFKAVVA (90 aa)) are bacterial histone-like domain. An N6-acetyllysine mark is found at Lys-3, Lys-72, Lys-86, Lys-103, Lys-137, Lys-144, and Lys-156. Residues 101–200 (AVKRGVATSA…KVTAAKRGRK (100 aa)) are degenerate repeats region. The interval 179-200 (AKKAAVKKAPAKKVTAAKRGRK) is disordered.

The protein belongs to the bacterial histone-like protein family. Long actinobacterial subfamily. In terms of assembly, binds to human laminin-2. In terms of processing, may also be methylated and possibly phosphorylated in vivo.

It localises to the cytoplasm. It is found in the nucleoid. The protein localises to the secreted. The protein resides in the cell wall. Its subcellular location is the cell surface. The catalysed reaction is 4 Fe(2+) + O2 + 4 H(+) = 4 Fe(3+) + 2 H2O. A nucleoid-associated protein (NAP) that plays a role in local chromosome architecture and chromosome compactation. Required for biofilm formation, stress survival and possibly in cell wall assembly, probably influences transcription. RNase E and HupB jointly contribute to cellular adaptation to changing growth conditions and survival during antibiotic treatment and in the host. In terms of biological role, binds Fe(3+) but not Fe(2+). Has ferroxidase activity, converts Fe(2+) into Fe(3+) and in the presence of H(2)O(2) prevents the generation of hydroxyl radicals (the Fenton reaction). Protects DNA from damage in the presence of FeSO(4) and H(2)O(2). May function in iron storage. Functionally, may be involved in entry into human Schwann cells. This Mycobacterium leprae (strain TN) protein is DNA-binding protein HupB.